Reading from the N-terminus, the 389-residue chain is Large envelope protein (389 aa).

Position 1 is an N-acetylmethionine (Met-1). A lipid anchor (N-myristoyl glycine; by host) is attached at Gly-2. The segment at 2-108 (GQNLSVTNPL…PPLRDTHPQA (107 aa)) is pre-S1. Positions 2–163 (GQNLSVTNPL…FLKTGDPALN (162 aa)) are pre-S. The Virion surface; in external conformation segment spans residues 2-170 (GQNLSVTNPL…ALNMESISSG (169 aa)). Residues 2–242 (GQNLSVTNPL…PGYRWMCLRR (241 aa)) are Intravirion; in internal conformation-facing. The segment at 78-105 (PAVPPPASTNRQSGRRPTPISPPLRDTH) is disordered. The segment at 109–163 (MQWNSTVFHQALQDPRVRGLYFPAGGSSSGTVSPVPTTASPISSTFLKTGDPALN) is pre-S2. A helical membrane pass occupies residues 171-191 (FLGPLLVLQAGFFLLTKILTI). Topologically, residues 192 to 242 (PQSLDSWWTSLNFLGGAPVCPGQNSQSLTSNHSPTSCPPICPGYRWMCLRR) are intravirion; in external conformation. A helical transmembrane segment spans residues 243–263 (FIIFLFILLLCLIFLLVLLDY). The Virion surface portion of the chain corresponds to 264–337 (RGMLPVCPLL…WASVRFSWLN (74 aa)). Asn-309 carries N-linked (GlcNAc...) asparagine; by host glycosylation. Residues 338-358 (LLVPFVQWFAGLSPTVWLSVI) form a helical membrane-spanning segment. The Intravirion portion of the chain corresponds to 359–364 (WMIWYW). A helical membrane pass occupies residues 365–387 (GPSLYNILSPFIPLLPIFFCLWA). The Virion surface segment spans residues 388–389 (YI).

Belongs to the orthohepadnavirus major surface antigen family. As to quaternary structure, in its internal form (Li-HBsAg), interacts with the capsid protein and with the isoform S. Interacts with host chaperone CANX. Associates with host chaperone CANX through its pre-S2 N glycan; this association may be essential for isoform M proper secretion. In terms of assembly, interacts with isoform L. Interacts with the antigens of satellite virus HDV (HDVAgs); this interaction is required for encapsidation of HDV genomic RNA. Post-translationally, isoform M is N-terminally acetylated by host at a ratio of 90%, and N-glycosylated by host at the pre-S2 region. Myristoylated.

It is found in the virion membrane. Functionally, the large envelope protein exists in two topological conformations, one which is termed 'external' or Le-HBsAg and the other 'internal' or Li-HBsAg. In its external conformation the protein attaches the virus to cell receptors and thereby initiating infection. This interaction determines the species specificity and liver tropism. This attachment induces virion internalization predominantly through caveolin-mediated endocytosis. The large envelope protein also assures fusion between virion membrane and endosomal membrane. In its internal conformation the protein plays a role in virion morphogenesis and mediates the contact with the nucleocapsid like a matrix protein. In terms of biological role, the middle envelope protein plays an important role in the budding of the virion. It is involved in the induction of budding in a nucleocapsid independent way. In this process the majority of envelope proteins bud to form subviral lipoprotein particles of 22 nm of diameter that do not contain a nucleocapsid. This is Large envelope protein from Pongo pygmaeus (Bornean orangutan).